The chain runs to 429 residues: Stromal membrane-associated protein 2 (429 aa).

One can recognise an Arf-GAP domain in the interval 13–137 (QAVLANLLLE…LDINAFRKEK (125 aa)). The C4-type zinc finger occupies 28–51 (CADCQSKGPRWASWNIGVFICIRC). The residue at position 127 (Ser-127) is a Phosphoserine. Positions 138-172 (DNKWKRGSEPAPEKKMEPVVFEKVKMPQKKEDPQL) are enriched in basic and acidic residues. Disordered regions lie at residues 138–181 (DNKW…PKSK) and 217–263 (VSSP…KKQL). Residues 163–232 (MPQKKEDPQL…SVSRKVVGSM (70 aa)) form an interaction with clathrin heavy chains region. Over residues 217-231 (VSSPSSSVSRKVVGS) the composition is skewed to low complexity. 5 positions are modified to phosphoserine: Ser-219, Ser-223, Ser-225, Ser-231, and Ser-240. Over residues 253–263 (SKSEETSKKQL) the composition is skewed to basic and acidic residues. The tract at residues 340–429 (MGGMQASMMG…NQTLSPQMWK (90 aa)) is interaction with PICALM.

In terms of assembly, interacts with ARF1. Interacts with PICALM and clathrin heavy chains.

The protein resides in the cytoplasm. Its function is as follows. GTPase activating protein that acts on ARF1. Can also activate ARF6 (in vitro). May play a role in clathrin-dependent retrograde transport from early endosomes to the trans-Golgi network. The protein is Stromal membrane-associated protein 2 (SMAP2) of Bos taurus (Bovine).